The chain runs to 154 residues: Large ribosomal subunit protein uL22c (154 aa).

This sequence belongs to the universal ribosomal protein uL22 family. As to quaternary structure, part of the 50S ribosomal subunit.

It localises to the plastid. The protein localises to the chloroplast. In terms of biological role, this protein binds specifically to 23S rRNA. Functionally, the globular domain of the protein is located near the polypeptide exit tunnel on the outside of the subunit, while an extended beta-hairpin is found that lines the wall of the exit tunnel in the center of the 70S ribosome. The protein is Large ribosomal subunit protein uL22c (rpl22) of Guizotia abyssinica (Niger).